The sequence spans 730 residues: Regulatory factor X 4 (730 aa).

Positions 30 to 41 (YSSHTSLGNISN) are enriched in polar residues. Positions 30-59 (YSSHTSLGNISNDETDEEKENRASKPHSTP) are disordered. Positions 61–136 (TLQWLGENYE…YHYYGIAVKE (76 aa)) form a DNA-binding region, RFX-type winged-helix. The interval 500-532 (EPAISTPSPVPFSPAASSSSVEIPSATSPVSNQ) is disordered. Residues 512 to 528 (SPAASSSSVEIPSATSP) show a composition bias toward low complexity.

It belongs to the RFX family.

Its subcellular location is the nucleus. Functionally, required for neural tube ciliogenesis during embryogenesis. This Xenopus laevis (African clawed frog) protein is Regulatory factor X 4.